Here is a 1017-residue protein sequence, read N- to C-terminus: Pikachurin (1017 aa).

Positions 1 to 24 (MDLIRGVLLRLLLLASSLGPGAVS) are cleaved as a signal peptide. Fibronectin type-III domains lie at 37–136 (PPLD…TLSQ) and 144–239 (APQQ…TLCP). N-linked (GlcNAc...) asparagine glycosylation is present at asparagine 47. The EGF-like 1 domain occupies 343-381 (FDMPCDETLCSADSFCVNDYTWGGSRCQCTLGKGGESCS). Disulfide bonds link cysteine 347–cysteine 358, cysteine 352–cysteine 369, cysteine 371–cysteine 380, cysteine 534–cysteine 564, cysteine 569–cysteine 580, cysteine 574–cysteine 590, cysteine 592–cysteine 601, cysteine 788–cysteine 799, cysteine 793–cysteine 808, cysteine 810–cysteine 819, and cysteine 987–cysteine 1014. Residues 386–564 (IQYPQFFGHS…ALSGADVGEC (179 aa)) enclose the Laminin G-like 1 domain. 2 consecutive EGF-like domains span residues 565–602 (SSGI…RHCE) and 784–820 (AAHP…LHCQ). A Laminin G-like 2 domain is found at 609–788 (IPQFRESLRS…VNVENAAHPC (180 aa)). Positions 835 to 1014 (IEIPQFIGRS…AVDGKNINTC (180 aa)) constitute a Laminin G-like 3 domain.

Interacts with DAG1 alpha-dystroglycan. Interacts with GPR158 and GPR179; transsynaptic interaction is required for synaptic organization of photoreceptor cells. O-glycosylated; contains chondroitin sulfate and heparan sulfate.

The protein resides in the secreted. The protein localises to the extracellular space. Its subcellular location is the extracellular matrix. It is found in the synaptic cleft. It localises to the presynaptic active zone. Functionally, involved in both the retinal photoreceptor ribbon synapse formation and physiological functions of visual perception. Plays a key role in the synaptic organization of photoreceptors by mediating transsynaptic interaction between alpha-dystroglycan and GPR179 on the postsynaptic membrane. Necessary for proper bipolar dendritic tip apposition to the photoreceptor ribbon synapse. Promotes matrix assembly and cell adhesiveness. In Homo sapiens (Human), this protein is Pikachurin (EGFLAM).